We begin with the raw amino-acid sequence, 151 residues long: Viral interleukin-17 (151 aa).

An N-terminal signal peptide occupies residues 1-22; it reads MTFRKTSLVLLLLLSIDCIVKS. N-linked (GlcNAc...) asparagine; by host glycosylation is found at Asn-36, Asn-53, and Asn-64. Disulfide bonds link Cys-90/Cys-140 and Cys-95/Cys-142.

Belongs to the IL-17 family.

The protein resides in the secreted. The polypeptide is Viral interleukin-17 (13) (Saimiri sciureus (Common squirrel monkey)).